Here is a 186-residue protein sequence, read N- to C-terminus: Pyridoxal 5'-phosphate synthase subunit PdxT (186 aa).

46-48 (GES) is an L-glutamine binding site. Residue C75 is the Nucleophile of the active site. L-glutamine-binding positions include R101 and 129 to 130 (IR). Residues H165 and E167 each act as charge relay system in the active site.

This sequence belongs to the glutaminase PdxT/SNO family. In terms of assembly, in the presence of PdxS, forms a dodecamer of heterodimers. Only shows activity in the heterodimer.

The catalysed reaction is aldehydo-D-ribose 5-phosphate + D-glyceraldehyde 3-phosphate + L-glutamine = pyridoxal 5'-phosphate + L-glutamate + phosphate + 3 H2O + H(+). It catalyses the reaction L-glutamine + H2O = L-glutamate + NH4(+). Its pathway is cofactor biosynthesis; pyridoxal 5'-phosphate biosynthesis. Its function is as follows. Catalyzes the hydrolysis of glutamine to glutamate and ammonia as part of the biosynthesis of pyridoxal 5'-phosphate. The resulting ammonia molecule is channeled to the active site of PdxS. In Staphylococcus aureus (strain Mu3 / ATCC 700698), this protein is Pyridoxal 5'-phosphate synthase subunit PdxT.